A 144-amino-acid polypeptide reads, in one-letter code: 3-dehydroquinate dehydratase (144 aa).

The active-site Proton acceptor is the Tyr-22. Residues Asn-73, His-79, and Asp-86 each coordinate substrate. His-99 serves as the catalytic Proton donor. Substrate is bound by residues 100–101 and Arg-110; that span reads IS.

Belongs to the type-II 3-dehydroquinase family. Homododecamer.

The enzyme catalyses 3-dehydroquinate = 3-dehydroshikimate + H2O. The protein operates within metabolic intermediate biosynthesis; chorismate biosynthesis; chorismate from D-erythrose 4-phosphate and phosphoenolpyruvate: step 3/7. Catalyzes a trans-dehydration via an enolate intermediate. In Mycobacteroides abscessus (strain ATCC 19977 / DSM 44196 / CCUG 20993 / CIP 104536 / JCM 13569 / NCTC 13031 / TMC 1543 / L948) (Mycobacterium abscessus), this protein is 3-dehydroquinate dehydratase.